A 260-amino-acid polypeptide reads, in one-letter code: Neuraminyllactose-binding hemagglutinin (260 aa).

The N-terminal stretch at 1–27 (MRANNHFKDFAWKKCLLGASVVALLVG) is a signal peptide. The N-palmitoyl cysteine moiety is linked to residue cysteine 28. Residue cysteine 28 is the site of S-diacylglycerol cysteine attachment. The interval 134 to 139 (KRTIQK) is N-acetyl-neuraminyl-alpha(2,3)-lactose binding motif.

The protein resides in the cell outer membrane. This is Neuraminyllactose-binding hemagglutinin (hpaA) from Helicobacter pylori (Campylobacter pylori).